A 734-amino-acid chain; its full sequence is Photosystem I P700 chlorophyll a apoprotein A2 (734 aa).

8 consecutive transmembrane segments (helical) span residues 46–69 (IFAS…FHVA), 135–158 (LYTG…LHLQ), 175–199 (LNHH…HVAI), 273–291 (IAHH…GHMY), 330–353 (LHFQ…QHIY), 369–395 (AALY…IFFI), 417–439 (AIIS…LYVH), and 517–535 (FLVH…LILV). [4Fe-4S] cluster contacts are provided by cysteine 559 and cysteine 568. The next 2 helical transmembrane spans lie at 575–596 (AFYL…YWHW) and 643–665 (LSVW…MFLI). Positions 654, 662, and 670 each coordinate chlorophyll a. Position 671 (tryptophan 671) interacts with phylloquinone. A helical membrane pass occupies residues 707–727 (LVGLAHFSVGYIFTYAAFLIA).

This sequence belongs to the PsaA/PsaB family. As to quaternary structure, the PsaA/B heterodimer binds the P700 chlorophyll special pair and subsequent electron acceptors. PSI consists of a core antenna complex that captures photons, and an electron transfer chain that converts photonic excitation into a charge separation. The eukaryotic PSI reaction center is composed of at least 11 subunits. It depends on P700 is a chlorophyll a/chlorophyll a' dimer, A0 is one or more chlorophyll a, A1 is one or both phylloquinones and FX is a shared 4Fe-4S iron-sulfur center. as a cofactor.

Its subcellular location is the plastid. It is found in the chloroplast thylakoid membrane. The enzyme catalyses reduced [plastocyanin] + hnu + oxidized [2Fe-2S]-[ferredoxin] = oxidized [plastocyanin] + reduced [2Fe-2S]-[ferredoxin]. In terms of biological role, psaA and PsaB bind P700, the primary electron donor of photosystem I (PSI), as well as the electron acceptors A0, A1 and FX. PSI is a plastocyanin-ferredoxin oxidoreductase, converting photonic excitation into a charge separation, which transfers an electron from the donor P700 chlorophyll pair to the spectroscopically characterized acceptors A0, A1, FX, FA and FB in turn. Oxidized P700 is reduced on the lumenal side of the thylakoid membrane by plastocyanin. The chain is Photosystem I P700 chlorophyll a apoprotein A2 from Staurastrum punctulatum (Green alga).